The following is a 296-amino-acid chain: ATP synthase peripheral stalk subunit OSCP, mitochondrial (296 aa).

Belongs to the ATPase delta chain family. Component of the ATP synthase complex composed at least of ATP5F1A/subunit alpha, ATP5F1B/subunit beta, ATP5MC1/subunit c (homooctomer), MT-ATP6/subunit a, MT-ATP8/subunit 8, ATP5ME/subunit e, ATP5MF/subunit f, ATP5MG/subunit g, ATP5MK/subunit k, ATP5MJ/subunit j, ATP5F1C/subunit gamma, ATP5F1D/subunit delta, ATP5F1E/subunit epsilon, ATP5PF/subunit F6, ATP5PB/subunit b, ATP5PD/subunit d, ATP5PO/subunit OSCP. ATP synthase complex consists of a soluble F(1) head domain (subunits alpha(3) and beta(3)) - the catalytic core - and a membrane F(0) domain - the membrane proton channel (subunits c, a, 8, e, f, g, k and j). These two domains are linked by a central stalk (subunits gamma, delta, and epsilon) rotating inside the F1 region and a stationary peripheral stalk (subunits F6, b, d, and OSCP).

It localises to the mitochondrion. The protein localises to the mitochondrion inner membrane. Functionally, subunit OSCP, of the mitochondrial membrane ATP synthase complex (F(1)F(0) ATP synthase or Complex V) that produces ATP from ADP in the presence of a proton gradient across the membrane which is generated by electron transport complexes of the respiratory chain. ATP synthase complex consist of a soluble F(1) head domain - the catalytic core - and a membrane F(1) domain - the membrane proton channel. These two domains are linked by a central stalk rotating inside the F(1) region and a stationary peripheral stalk. During catalysis, ATP synthesis in the catalytic domain of F(1) is coupled via a rotary mechanism of the central stalk subunits to proton translocation. In vivo, can only synthesize ATP although its ATP hydrolase activity can be activated artificially in vitro. Part of the complex F(0) domain. Part of the complex F(0) domain and the peripheric stalk, which acts as a stator to hold the catalytic alpha(3)beta(3) subcomplex and subunit a/ATP6 static relative to the rotary elements. The protein is ATP synthase peripheral stalk subunit OSCP, mitochondrial of Dictyostelium discoideum (Social amoeba).